A 73-amino-acid polypeptide reads, in one-letter code: U-scoloptoxin(15)-Sa1a (73 aa).

A signal peptide spans 1-20 (MKFHIIFCLLAALMMTSAFA).

It belongs to the scoloptoxin-15 family. Post-translationally, contains 2 disulfide bonds. Expressed by the venom gland.

Its subcellular location is the secreted. The protein is U-scoloptoxin(15)-Sa1a of Scolopendra alternans (Florida Keys giant centipede).